The sequence spans 433 residues: GPI mannosyltransferase 2 (433 aa).

A run of 9 helical transmembrane segments spans residues 4 to 24 (LVKP…IISL), 109 to 129 (TAVI…FYLT), 148 to 165 (ATFT…GFFT), 172 to 194 (LSFL…IIPY), 204 to 226 (FYYT…NCIL), 247 to 267 (ALLF…RQQF), 322 to 342 (IPNF…TFYF), 354 to 374 (LIFI…VQII), and 410 to 430 (GYIY…VFFL).

This sequence belongs to the PIGV family.

It localises to the endoplasmic reticulum membrane. It functions in the pathway glycolipid biosynthesis; glycosylphosphatidylinositol-anchor biosynthesis. Functionally, mannosyltransferase involved in glycosylphosphatidylinositol-anchor biosynthesis. Transfers the second mannose to the glycosylphosphatidylinositol during GPI precursor assembly. This Candida glabrata (strain ATCC 2001 / BCRC 20586 / JCM 3761 / NBRC 0622 / NRRL Y-65 / CBS 138) (Yeast) protein is GPI mannosyltransferase 2 (GPI18).